A 378-amino-acid chain; its full sequence is Chaperone protein DnaJ (378 aa).

A J domain is found at 5–72 (DFYEVLGVPK…QKRAAYDQFG (68 aa)). The CR-type zinc-finger motif lies at 138–216 (GKEAQIRIPS…CHGQGKVKKQ (79 aa)). Residues cysteine 151, cysteine 154, cysteine 168, cysteine 171, cysteine 190, cysteine 193, cysteine 204, and cysteine 207 each coordinate Zn(2+). 4 CXXCXGXG motif repeats span residues 151-158 (CETCHGSG), 168-175 (CTTCSGTG), 190-197 (CPHCRGTG), and 204-211 (CVTCHGQG). The interval 354-378 (SLKKGGGKHSPSGESWTDRLKNLFT) is disordered. Residues 369 to 378 (WTDRLKNLFT) are compositionally biased toward basic and acidic residues.

This sequence belongs to the DnaJ family. In terms of assembly, homodimer. Requires Zn(2+) as cofactor.

The protein localises to the cytoplasm. Participates actively in the response to hyperosmotic and heat shock by preventing the aggregation of stress-denatured proteins and by disaggregating proteins, also in an autonomous, DnaK-independent fashion. Unfolded proteins bind initially to DnaJ; upon interaction with the DnaJ-bound protein, DnaK hydrolyzes its bound ATP, resulting in the formation of a stable complex. GrpE releases ADP from DnaK; ATP binding to DnaK triggers the release of the substrate protein, thus completing the reaction cycle. Several rounds of ATP-dependent interactions between DnaJ, DnaK and GrpE are required for fully efficient folding. Also involved, together with DnaK and GrpE, in the DNA replication of plasmids through activation of initiation proteins. In Paracidovorax citrulli (strain AAC00-1) (Acidovorax citrulli), this protein is Chaperone protein DnaJ.